Consider the following 691-residue polypeptide: Elongation factor G (691 aa).

The tr-type G domain occupies 8 to 282; the sequence is ERVRNIGIAA…AVVDYLPAPI (275 aa). Residues 17–24, 81–85, and 135–138 contribute to the GTP site; these read AHIDAGKT, DTPGH, and NKMD.

It belongs to the TRAFAC class translation factor GTPase superfamily. Classic translation factor GTPase family. EF-G/EF-2 subfamily.

The protein localises to the cytoplasm. Functionally, catalyzes the GTP-dependent ribosomal translocation step during translation elongation. During this step, the ribosome changes from the pre-translocational (PRE) to the post-translocational (POST) state as the newly formed A-site-bound peptidyl-tRNA and P-site-bound deacylated tRNA move to the P and E sites, respectively. Catalyzes the coordinated movement of the two tRNA molecules, the mRNA and conformational changes in the ribosome. This chain is Elongation factor G, found in Synechococcus sp. (strain CC9311).